Here is a 535-residue protein sequence, read N- to C-terminus: Beta-hexosaminidase 3 (535 aa).

An N-terminal signal peptide occupies residues 1–24; sequence MRGSGAKIAGVLPLFMLFIAGTIS. N-linked (GlcNAc...) asparagine glycosylation occurs at Asn-92. Cys-292 and Cys-334 are oxidised to a cystine. Catalysis depends on Glu-329, which acts as the Proton donor. Asn-331, Asn-405, Asn-441, and Asn-496 each carry an N-linked (GlcNAc...) asparagine glycan. Cys-506 and Cys-532 are oxidised to a cystine.

Belongs to the glycosyl hydrolase 20 family. In terms of processing, N-glycosylated. In terms of tissue distribution, expressed in roots, leaves, stems, flowers and siliques.

Its subcellular location is the cell membrane. It catalyses the reaction Hydrolysis of terminal non-reducing N-acetyl-D-hexosamine residues in N-acetyl-beta-D-hexosaminides.. With respect to regulation, slightly inhibited by N-acetylcastanospermine. Has a broad substrate specificity. Can use synthetic substrates such as pyridylaminated chitotriose, p-nitrophenyl-beta-N-acetylglucosaminide, p-nitrophenyl-2-acetamido-2-deoxy-beta-D-glucopyranoside (pNP-GlcNAc), p-nitrophenyl-2-acetamido-2-deoxy-beta-D-galactopyranoside (pNP-GalNAc), 4-methylumbelliferyl-2-acetamido-2-deoxy-beta-D-glucopyranoside (MU-GlcNAc), and 4-methylumbelliferyl-6-sulfo-2-acetamido-2-deoxy-beta-D-glucopyranoside (MU-GlcNAc-6SO(4)) as substrates. Removes terminal GlcNAc residues from alpha1,3- and alpha1,6-mannosyl branches of biantennary N-glycans without any strict branch preference. Required for the presence of paucimannosidic N-glycans in glycoproteins of roots and leaves. This Arabidopsis thaliana (Mouse-ear cress) protein is Beta-hexosaminidase 3 (HEXO3).